The sequence spans 392 residues: Protein NirF (392 aa).

It localises to the cytoplasm. In terms of biological role, required for the biosynthesis of heme d1 of nitrite reductase. Could have a dehydrogenase activity yielding sirohydrochlorin from precorrin-2 or dehydrogenation of propionate side chain C17. This chain is Protein NirF (nirF), found in Pseudomonas aeruginosa (strain ATCC 15692 / DSM 22644 / CIP 104116 / JCM 14847 / LMG 12228 / 1C / PRS 101 / PAO1).